A 363-amino-acid chain; its full sequence is GTPase Obg (363 aa).

The Obg domain maps to 1–159; it reads MKFVDEAFID…KSLKLELKVL (159 aa). Positions 160–341 constitute an OBG-type G domain; sequence ADVGLLGRPN…LVHAIFGHVQ (182 aa). Residues 166-173, 191-195, 213-216, 291-294, and 322-324 each bind GTP; these read GRPNAGKS, FTTLH, DIPG, NKLD, and SAL. Residues Ser173 and Thr193 each coordinate Mg(2+). The segment at 343 to 363 is disordered; that stretch reads GQRMDNEPPPLDPRFASAGPA.

It belongs to the TRAFAC class OBG-HflX-like GTPase superfamily. OBG GTPase family. As to quaternary structure, monomer. Mg(2+) is required as a cofactor.

The protein localises to the cytoplasm. In terms of biological role, an essential GTPase which binds GTP, GDP and possibly (p)ppGpp with moderate affinity, with high nucleotide exchange rates and a fairly low GTP hydrolysis rate. Plays a role in control of the cell cycle, stress response, ribosome biogenesis and in those bacteria that undergo differentiation, in morphogenesis control. This chain is GTPase Obg, found in Verminephrobacter eiseniae (strain EF01-2).